The primary structure comprises 633 residues: tRNA uridine 5-carboxymethylaminomethyl modification enzyme MnmG (633 aa).

Gly-13–Gly-18 is an FAD binding site. Residue Gly-273–Phe-287 participates in NAD(+) binding.

Belongs to the MnmG family. As to quaternary structure, homodimer. Heterotetramer of two MnmE and two MnmG subunits. FAD serves as cofactor.

It localises to the cytoplasm. NAD-binding protein involved in the addition of a carboxymethylaminomethyl (cmnm) group at the wobble position (U34) of certain tRNAs, forming tRNA-cmnm(5)s(2)U34. The chain is tRNA uridine 5-carboxymethylaminomethyl modification enzyme MnmG from Pseudoalteromonas atlantica (strain T6c / ATCC BAA-1087).